Here is a 94-residue protein sequence, read N- to C-terminus: Secretoglobin family 1C member 1 (94 aa).

Positions 1–22 are cleaved as a signal peptide; sequence MKGSSALLVALTVLCICGLTRA.

This sequence belongs to the secretoglobin family. In terms of tissue distribution, expressed in the olfactory mucosa.

It is found in the secreted. This Rattus norvegicus (Rat) protein is Secretoglobin family 1C member 1 (Scgb1c1).